The sequence spans 456 residues: Exodeoxyribonuclease 7 large subunit (456 aa).

This sequence belongs to the XseA family. In terms of assembly, heterooligomer composed of large and small subunits.

It localises to the cytoplasm. It catalyses the reaction Exonucleolytic cleavage in either 5'- to 3'- or 3'- to 5'-direction to yield nucleoside 5'-phosphates.. Bidirectionally degrades single-stranded DNA into large acid-insoluble oligonucleotides, which are then degraded further into small acid-soluble oligonucleotides. The chain is Exodeoxyribonuclease 7 large subunit from Escherichia coli (strain SE11).